A 74-amino-acid polypeptide reads, in one-letter code: Male-specific sperm protein Mst84Db (74 aa).

Belongs to the MST(3)CGP family. As to expression, testis.

The chain is Male-specific sperm protein Mst84Db (Mst84Db) from Drosophila melanogaster (Fruit fly).